Reading from the N-terminus, the 406-residue chain is Imidazolonepropionase (406 aa).

2 residues coordinate Fe(3+): H75 and H77. Zn(2+) contacts are provided by H75 and H77. Residues R84, Y147, and H180 each contribute to the 4-imidazolone-5-propanoate site. Y147 provides a ligand contact to N-formimidoyl-L-glutamate. A Fe(3+)-binding site is contributed by H245. Residue H245 coordinates Zn(2+). Q248 serves as a coordination point for 4-imidazolone-5-propanoate. D320 serves as a coordination point for Fe(3+). D320 is a Zn(2+) binding site. Residues N322 and G324 each contribute to the N-formimidoyl-L-glutamate site. T325 is a binding site for 4-imidazolone-5-propanoate.

It belongs to the metallo-dependent hydrolases superfamily. HutI family. It depends on Zn(2+) as a cofactor. Requires Fe(3+) as cofactor.

Its subcellular location is the cytoplasm. The catalysed reaction is 4-imidazolone-5-propanoate + H2O = N-formimidoyl-L-glutamate. The protein operates within amino-acid degradation; L-histidine degradation into L-glutamate; N-formimidoyl-L-glutamate from L-histidine: step 3/3. In terms of biological role, catalyzes the hydrolytic cleavage of the carbon-nitrogen bond in imidazolone-5-propanoate to yield N-formimidoyl-L-glutamate. It is the third step in the universal histidine degradation pathway. The chain is Imidazolonepropionase from Hyphomonas neptunium (strain ATCC 15444).